The sequence spans 229 residues: Urease accessory protein UreG (229 aa).

Residue 24 to 31 (GPVGSGKT) coordinates GTP.

The protein belongs to the SIMIBI class G3E GTPase family. UreG subfamily. As to quaternary structure, homodimer. UreD, UreF and UreG form a complex that acts as a GTP-hydrolysis-dependent molecular chaperone, activating the urease apoprotein by helping to assemble the nickel containing metallocenter of UreC. The UreE protein probably delivers the nickel.

It is found in the cytoplasm. Facilitates the functional incorporation of the urease nickel metallocenter. This process requires GTP hydrolysis, probably effectuated by UreG. In Albidiferax ferrireducens (strain ATCC BAA-621 / DSM 15236 / T118) (Rhodoferax ferrireducens), this protein is Urease accessory protein UreG.